A 182-amino-acid polypeptide reads, in one-letter code: tRNA-splicing endonuclease (182 aa).

Catalysis depends on residues tyrosine 119, histidine 127, and lysine 158.

Belongs to the tRNA-intron endonuclease family. Archaeal short subfamily. In terms of assembly, homotetramer; although the tetramer contains four active sites, only two participate in the cleavage. Therefore, it should be considered as a dimer of dimers.

The catalysed reaction is pretRNA = a 3'-half-tRNA molecule with a 5'-OH end + a 5'-half-tRNA molecule with a 2',3'-cyclic phosphate end + an intron with a 2',3'-cyclic phosphate and a 5'-hydroxyl terminus.. Functionally, endonuclease that removes tRNA introns. Cleaves pre-tRNA at the 5'- and 3'-splice sites to release the intron. The products are an intron and two tRNA half-molecules bearing 2',3' cyclic phosphate and 5'-OH termini. Recognizes a pseudosymmetric substrate in which 2 bulged loops of 3 bases are separated by a stem of 4 bp. This Saccharolobus islandicus (strain Y.N.15.51 / Yellowstone #2) (Sulfolobus islandicus) protein is tRNA-splicing endonuclease.